Reading from the N-terminus, the 167-residue chain is Cytochrome b6-f complex subunit 4 (167 aa).

3 helical membrane passes run 36 to 56 (LLYI…GLAV), 95 to 115 (LLGV…PFLE), and 131 to 151 (TVFL…TLPI).

It belongs to the cytochrome b family. PetD subfamily. In terms of assembly, the 4 large subunits of the cytochrome b6-f complex are cytochrome b6, subunit IV (17 kDa polypeptide, petD), cytochrome f and the Rieske protein, while the 4 small subunits are petG, petL, petM and petN. The complex functions as a dimer.

It is found in the plastid. The protein resides in the chloroplast thylakoid membrane. Its function is as follows. Component of the cytochrome b6-f complex, which mediates electron transfer between photosystem II (PSII) and photosystem I (PSI), cyclic electron flow around PSI, and state transitions. In Calycanthus floridus var. glaucus (Eastern sweetshrub), this protein is Cytochrome b6-f complex subunit 4.